Reading from the N-terminus, the 265-residue chain is Putative carbamate hydrolase RutD (265 aa).

In terms of domain architecture, AB hydrolase-1 spans 14–123 (PTLVLSSGLG…WSSPNPHSAR (110 aa)).

It belongs to the AB hydrolase superfamily. Hydrolase RutD family.

It carries out the reaction carbamate + 2 H(+) = NH4(+) + CO2. In terms of biological role, involved in pyrimidine catabolism. May facilitate the hydrolysis of carbamate, a reaction that can also occur spontaneously. In Stutzerimonas stutzeri (strain A1501) (Pseudomonas stutzeri), this protein is Putative carbamate hydrolase RutD.